Consider the following 395-residue polypeptide: MAKEHYERTKPHVNIGTIGHVDHGKTTLTAAITKVLASKGLAKEQDFASIDAAPEERERGITINTAHVEYETEKRHYAHIDAPGHADYVKNMITGAAQMDGAILVVAATDGPMPQTREHILLARQVGVDYIVVFLNKTDLVDDDELVDLVEMEVRELLSEYDFPGDDIPVIRGSALKALEGDPEQEKVIMHLMDVVDEYIPTPVRDTEKPFLMPVEDVFSITGRGTVASGRIDRGTVKVGDEVEIVGLHEDVLKSTVTGLEMFRKTLDLGEAGDNVGALLRGVNREQVVRGQVLAKPGSIQTHKKFKGEVYILSKEEGGRHTPFFSNYRPQFYFHTTDITGVIELPDGVEMVMPGDNVTFTVELIQPAAIEKGTKFTVREGGHTVGAGVVSEIDD.

Residues 10 to 204 enclose the tr-type G domain; the sequence is KPHVNIGTIG…VVDEYIPTPV (195 aa). A G1 region spans residues 19–26; that stretch reads GHVDHGKT. 19–26 contributes to the GTP binding site; the sequence is GHVDHGKT. Residue T26 participates in Mg(2+) binding. The G2 stretch occupies residues 60 to 64; that stretch reads GITIN. Residues 81-84 form a G3 region; the sequence is DAPG. GTP-binding positions include 81–85 and 136–139; these read DAPGH and NKTD. The segment at 136-139 is G4; the sequence is NKTD. The interval 174 to 176 is G5; the sequence is SAL.

It belongs to the TRAFAC class translation factor GTPase superfamily. Classic translation factor GTPase family. EF-Tu/EF-1A subfamily. In terms of assembly, monomer.

It is found in the cytoplasm. The catalysed reaction is GTP + H2O = GDP + phosphate + H(+). GTP hydrolase that promotes the GTP-dependent binding of aminoacyl-tRNA to the A-site of ribosomes during protein biosynthesis. The protein is Elongation factor Tu of Lactiplantibacillus plantarum (strain ATCC BAA-793 / NCIMB 8826 / WCFS1) (Lactobacillus plantarum).